Reading from the N-terminus, the 61-residue chain is Small ribosomal subunit protein uS14 (61 aa).

Cysteine 24, cysteine 27, cysteine 40, and cysteine 43 together coordinate Zn(2+).

The protein belongs to the universal ribosomal protein uS14 family. Zinc-binding uS14 subfamily. Part of the 30S ribosomal subunit. Contacts proteins S3 and S10. Zn(2+) is required as a cofactor.

Binds 16S rRNA, required for the assembly of 30S particles and may also be responsible for determining the conformation of the 16S rRNA at the A site. This chain is Small ribosomal subunit protein uS14, found in Clostridium perfringens (strain ATCC 13124 / DSM 756 / JCM 1290 / NCIMB 6125 / NCTC 8237 / Type A).